We begin with the raw amino-acid sequence, 354 residues long: Nucleoporin seh1 (354 aa).

WD repeat units follow at residues 10–49 (DHKDVIHDVVFDYYGRRMATCSSDQTVKIWDEDGQGKWNV), 55–96 (AHSG…KVSS), 112–153 (DSRT…NLSQ), 161–209 (SNKL…RKCV), 216–259 (DITD…TDIS), and 270–309 (EHNCPVWRVCWNMLATMLISTGDDGCVRLWRMNYNRQWRC).

The protein belongs to the WD repeat SEC13 family. Probable component of the nuclear pore complex (NPC). Component of the GATOR complex consisting of mio, Nup44A/Seh1, Im11, Nplr3, Nplr2, Wdr24, Wdr59 and Sec13. Within the GATOR complex, probable component of the GATOR2 subcomplex which is likely composed of mio, Nup44A/Seh1, Wdr24, Wdr59 and Sec13. Interacts with mio. Interacts with Wdr24. The GATOR2 complex associates with unmet in the absence of S-adenosyl-L-methionine; the mio-Wdr24-Nup44A subcomplex is essential and sufficient for this interaction while Wdr59 and Sec13 are dispensable. This association acts as a nutrient sensor to inhibit mTORC1 signaling in the absence of methionine. As to expression, expressed in ovarian cysts.

The protein resides in the nucleus envelope. Its subcellular location is the lysosome. Probable component of the nuclear pore complex (NPC). Involved in maintaining the localization of another nucleoporin Mgtor to the nuclear envelope of early meiotic female germline cells. It is not involved in recruiting the nucleoporins Mgtor, Nup107, Nup153 and FG-containing nucleoporins to the NPC. Its function is as follows. An essential component of the GATOR subcomplex GATOR2 which functions as an activator of the amino acid-sensing branch of the mTORC1 signaling pathway. The two GATOR subcomplexes, GATOR1 and GATOR2, regulate the mTORC1 pathway in order to mediate metabolic homeostasis, female gametogenesis and the response to amino acid limitation and complete starvation. GATOR2 activates the mTORC1 signaling pathway through the inhibition of the GATOR1 subcomplex, controlling the switch to cell proliferation growth under nutrient replete conditions and growth during female oocyte development. This component is required for activating mTORC1 specifically in germline cells to promote cell growth and maintain the oocyte fate, probably influences the organization and/or function of microtubules within ovarian cysts, and promotes accumulation of another GATOR2 complex member mio in germline and somatic tissues. GATOR1 and GATOR2 act at different stages of oogenesis to regulate mTORC1 in order to control meiotic entry and promote oocyte growth and development. After exactly four mitotic cyst divisions, the GATOR1 complex members (Iml1, Nprl2 and Nprl3) down-regulate mTORC1 to slow cellular metabolism and promote the mitotic/meiotic transition. At later stages of oogenesis, the mio and Nup44A components of the GATOR2 complex inhibit GATOR1 and thus activate mTORC1 to promote meiotic progression, and drive oocyte growth and development. In addition to its role in the regulation of the mTORC1 complex, functions independently of mTORC1 to prevent the inappropriate accumulation of autolysosomes in germline tissues. The polypeptide is Nucleoporin seh1 (Drosophila melanogaster (Fruit fly)).